Consider the following 194-residue polypeptide: Histone H1.0 (194 aa).

N-acetylmethionine is present on M1. The tract at residues 1–26 (MTENSTSTPAAKPKRAKAAKKSTDHP) is disordered. Position 2 is an N-acetylthreonine; in Histone H1.0, N-terminally processed (T2). The H15 domain occupies 24–97 (DHPKYSDMIV…GASGSFRLAK (74 aa)). Residue R42 is modified to Citrulline. Residues 86-194 (GVGASGSFRL…SSAKRASKKK (109 aa)) are disordered. An ADP-ribosylserine modification is found at S104. Residues 105–194 (VAFKKTKKEV…SSAKRASKKK (90 aa)) are compositionally biased toward basic residues.

Belongs to the histone H1/H5 family. In terms of processing, ADP-ribosylated on Ser-104 in response to DNA damage.

Its subcellular location is the nucleus. It localises to the chromosome. Histones H1 are necessary for the condensation of nucleosome chains into higher-order structures. The histones H1.0 are found in cells that are in terminal stages of differentiation or that have low rates of cell division. The protein is Histone H1.0 (H1-0) of Rattus norvegicus (Rat).